A 222-amino-acid polypeptide reads, in one-letter code: Charged multivesicular body protein 4b (222 aa).

Disordered regions lie at residues 1–21 and 183–222; these read MSLIGKLFGTGGKGAKGPSPQ and GPETVPLPNVPAAVLPAKPVKKKQEEDDDDMRELENWATA. A coiled-coil region spans residues 21–182; the sequence is QEAIQKLRDT…ELDKNLLEVQ (162 aa). The span at 188 to 200 shows a compositional bias: low complexity; the sequence is PLPNVPAAVLPAK.

Belongs to the SNF7 family. As to quaternary structure, probable core component of the endosomal sorting required for transport complex III (ESCRT-III). ESCRT-III components are thought to multimerize to form a flat lattice on the perimeter membrane of the endosome.

It localises to the cytoplasm. The protein localises to the cytosol. Its subcellular location is the late endosome membrane. It is found in the midbody. Functionally, probable core component of the endosomal sorting required for transport complex III (ESCRT-III) which is involved in multivesicular bodies (MVBs) formation and sorting of endosomal cargo proteins into MVBs. MVBs contain intraluminal vesicles (ILVs) that are generated by invagination and scission from the limiting membrane of the endosome and mostly are delivered to lysosomes enabling degradation of membrane proteins, such as stimulated growth factor receptors, lysosomal enzymes and lipids. This is Charged multivesicular body protein 4b (chmp4b) from Xenopus tropicalis (Western clawed frog).